Consider the following 415-residue polypeptide: Alpha-N-acetylgalactosaminidase (415 aa).

Residues 1-17 (MLQKTVLLLALVAQVLM) form the signal peptide. Cystine bridges form between Cys38/Cys80, Cys42/Cys49, and Cys127/Cys158. Residues 78-79 (DD) and Lys154 contribute to the substrate site. The active-site Nucleophile is the Asp156. The N-linked (GlcNAc...) asparagine glycan is linked to Asn177. The cysteines at positions 187 and 209 are disulfide-linked. Ser188 contributes to the substrate binding site. Asn201 carries N-linked (GlcNAc...) asparagine glycosylation. Arg213 and Asp217 together coordinate substrate. The active-site Proton donor is the Asp217. Ser322 is modified (phosphoserine). A glycan (N-linked (GlcNAc...) asparagine) is linked at Asn330. Residue Ser332 is modified to Phosphoserine. N-linked (GlcNAc...) asparagine glycosylation occurs at Asn385.

Belongs to the glycosyl hydrolase 27 family. In terms of assembly, homodimer.

The protein localises to the lysosome. The catalysed reaction is Cleavage of non-reducing alpha-(1-&gt;3)-N-acetylgalactosamine residues from human blood group A and AB mucin glycoproteins, Forssman hapten and blood group A lacto series glycolipids.. The enzyme catalyses a neolactoside IV(3)-alpha-GalNAc,IV(2)-alpha-Fuc-nLc4Cer(d18:1(4E)) + H2O = a neolactoside IV(2)-alpha-Fuc-nLc4Cer(d18:1(4E)) + N-acetyl-alpha-D-galactosamine. It catalyses the reaction a neolactoside IV(3)-alpha-GalNAc,IV(2)-alpha-Fuc-nLc4Cer(d18:0) + H2O = a neolactoside IV(2)-alpha-Fuc-nLc4Cer(d18:0) + N-acetyl-alpha-D-galactosamine. It carries out the reaction a globoside IV3GalNAc-Gb4Cer + H2O = N-acetyl-alpha-D-galactosamine + a globoside Gb4Cer. Its function is as follows. Removes terminal alpha-N-acetylgalactosamine residues from glycolipids and glycopeptides. Required for the breakdown of glycolipids. This Rattus norvegicus (Rat) protein is Alpha-N-acetylgalactosaminidase (Naga).